Consider the following 317-residue polypeptide: Ornithine carbamoyltransferase (317 aa).

Residues 57-60 (STRT), Gln84, Arg108, and 135-138 (HPCQ) contribute to the carbamoyl phosphate site. L-ornithine is bound by residues Asn166, Asp230, and 234–235 (SM). Residues 270–271 (CL) and Arg298 each bind carbamoyl phosphate.

Belongs to the aspartate/ornithine carbamoyltransferase superfamily. OTCase family. In terms of assembly, homododecamer.

The protein resides in the cytoplasm. It catalyses the reaction carbamoyl phosphate + L-ornithine = L-citrulline + phosphate + H(+). It functions in the pathway amino-acid biosynthesis; L-arginine biosynthesis; L-arginine from L-ornithine and carbamoyl phosphate: step 1/3. Reversibly catalyzes the transfer of the carbamoyl group from carbamoyl phosphate (CP) to the N(epsilon) atom of ornithine (ORN) to produce L-citrulline. This chain is Ornithine carbamoyltransferase, found in Pyrococcus abyssi (strain GE5 / Orsay).